Consider the following 312-residue polypeptide: tRNA uridine(34) hydroxylase (312 aa).

Positions 124-218 (SDPEVLLIDT…YLEEVPQEQT (95 aa)) constitute a Rhodanese domain. The active-site Cysteine persulfide intermediate is cysteine 178. 2 stretches are compositionally biased toward basic and acidic residues: residues 279-294 (TRES…ELAR) and 302-312 (IGRDPRQLNEA). The segment at 279–312 (TRESARERQKQIELARARNQPHPIGRDPRQLNEA) is disordered.

This sequence belongs to the TrhO family.

The enzyme catalyses uridine(34) in tRNA + AH2 + O2 = 5-hydroxyuridine(34) in tRNA + A + H2O. Functionally, catalyzes oxygen-dependent 5-hydroxyuridine (ho5U) modification at position 34 in tRNAs. In Ectopseudomonas mendocina (strain ymp) (Pseudomonas mendocina), this protein is tRNA uridine(34) hydroxylase.